A 793-amino-acid polypeptide reads, in one-letter code: Protein translocase subunit SecA 2 (793 aa).

Residues Q77, 95–99 (GEGKT), and D493 each bind ATP.

Belongs to the SecA family. In terms of assembly, monomer and homodimer. Part of the essential Sec protein translocation apparatus which comprises SecA, SecYEG and auxiliary proteins SecDF. Other proteins may also be involved.

The protein resides in the cell membrane. Its subcellular location is the cytoplasm. It carries out the reaction ATP + H2O + cellular proteinSide 1 = ADP + phosphate + cellular proteinSide 2.. Functionally, part of the Sec protein translocase complex. Interacts with the SecYEG preprotein conducting channel. Has a central role in coupling the hydrolysis of ATP to the transfer of proteins into and across the cell membrane, serving as an ATP-driven molecular motor driving the stepwise translocation of polypeptide chains across the membrane. This is Protein translocase subunit SecA 2 from Streptococcus sanguinis (strain SK36).